The primary structure comprises 514 residues: Peptide chain release factor 3 (514 aa).

A tr-type G domain is found at 8 to 268 (KKRRTFAIIS…TFLKFAPEPH (261 aa)). GTP-binding positions include 17-24 (SHPDAGKT), 85-89 (DTPGH), and 139-142 (NKLD).

The protein belongs to the TRAFAC class translation factor GTPase superfamily. Classic translation factor GTPase family. PrfC subfamily.

Its subcellular location is the cytoplasm. Its function is as follows. Increases the formation of ribosomal termination complexes and stimulates activities of RF-1 and RF-2. It binds guanine nucleotides and has strong preference for UGA stop codons. It may interact directly with the ribosome. The stimulation of RF-1 and RF-2 is significantly reduced by GTP and GDP, but not by GMP. The sequence is that of Peptide chain release factor 3 from Streptococcus pneumoniae (strain Hungary19A-6).